An 855-amino-acid chain; its full sequence is Envelope glycoprotein H (855 aa).

An N-terminal signal peptide occupies residues 1 to 19; it reads MSQPYLKIAILVAATIVSA. Topologically, residues 20–815 are virion surface; the sequence is IPVWTTPVST…ASYSAFKIPS (796 aa). N-linked (GlcNAc...) asparagine; by host glycosylation is found at Asn42, Asn48, Asn52, Asn68, Asn126, Asn189, and Asn217. Residues 174–195 are disordered; that stretch reads PVGVVLSPPRTSPDVNNTIRDD. Residues 247-310 are interaction with gL; sequence DTTQAIAYLG…YAGPIYKVYV (64 aa). N-linked (GlcNAc...) asparagine; by host glycans are attached at residues Asn503, Asn679, Asn773, and Asn796. Residues 816-836 traverse the membrane as a helical segment; the sequence is TYLWASIGGLLLAILILYVIV. Topologically, residues 837-855 are intravirion; it reads KMLCGGVINNDYSLLLNSE.

This sequence belongs to the herpesviridae glycoprotein H family. Interacts with glycoprotein L (gL); this interaction is necessary for the correct processing and cell surface expression of gH. The heterodimer gH/gL seems to interact with gB trimers during fusion. N-glycosylated, O-glycosylated, and sialylated.

Its subcellular location is the virion membrane. It is found in the host cell membrane. The protein resides in the host endosome membrane. Its function is as follows. The heterodimer glycoprotein H-glycoprotein L is required for the fusion of viral and plasma membranes leading to virus entry into the host cell. Following initial binding to host receptor, membrane fusion is mediated by the fusion machinery composed of gB and the heterodimer gH/gL. May also be involved in the fusion between the virion envelope and the outer nuclear membrane during virion morphogenesis. The polypeptide is Envelope glycoprotein H (Equine herpesvirus 4 (strain 1942) (EHV-4)).